An 861-amino-acid polypeptide reads, in one-letter code: MNTKISEHTPAMQQYLTIKEDFPDLLLFYRMGDFYELFFDDAKKAGALLNITVTARGKIRGKPIPMAGVPAHALENYLAKLVKQGMSAVICEQVGEVGKGLVERAVTRIITPGTLTDENLLDEARDSILLSLFCFQNNYFFAYADITRGDFQLTMGLNEQELQSEIERLRPAEILMPETANVPAFITALKPHRQPDWYFDSDSSYRLICEYYQTTTIDGFGIAPDDPALSAAGCLLQYLHDTHKYHLPPLKPLQKQHDHQYLLLDATTRRNLELEYTLNGESKHSLIATINRCSTAAGVRTLKRWINQPLIQHEYILERQEAVTALLTHADLDEIAKTLRATADIERITTRIALQTAKPRELAQLRDTLMQLPAINALLQTSAAHSPLLAAATQALMHCPQLGDLLMKALVEAPPLTLKEGGIFAAGYLPELDALHELTDHSAQLLEKMEQEEKAQTGLNTLKIGFNRVHGYYIDIPRSQAANAPAHWIRRQTLKNSERYVTESLKTLEERLLNAQDEALALEKQAYTELLITLDKQRDDLYRLATALAESDVLTCFARLAKEHHYCRPQFSNQIEIQITAGRHPVVEQLSAQPFIANDLVLHQKRQLLILTGPNMGGKSTYMRQTALIVILALAGSYVPAKEARIGRINRIFTRIGASDDLAGGRSTFMVEMTETANILNNADEHSLVIMDEIGRGTSTFDGLSLAWAVADHLLQKNRALTLFATHYFELTALVERHQHGANIHLSAAEDQEHIVFLYHIEEGATSKSYGLHVAKLAGVPQAVIHNANAKLRQLEEKRVPQRAHQALLPIESQKPSLSPQIKNILQQIQEINPDELSPKAAHEWLYQLKTLVRDLDKNEL.

613 to 620 (GPNMGGKS) is a binding site for ATP.

It belongs to the DNA mismatch repair MutS family.

This protein is involved in the repair of mismatches in DNA. It is possible that it carries out the mismatch recognition step. This protein has a weak ATPase activity. This is DNA mismatch repair protein MutS from Dichelobacter nodosus (strain VCS1703A).